A 553-amino-acid polypeptide reads, in one-letter code: Transcription factor MYB65 (553 aa).

The interval 1–44 (MSYTTATADSDDGMHSSIHNESPAPDSISNGCRSRGKRSVLKKG) is disordered. HTH myb-type domains are found at residues 38–90 (RSVL…ANHL) and 91–145 (RPNL…KRRQ). 2 consecutive DNA-binding regions (H-T-H motif) follow at residues 66–90 (WNAVQKHTSLARCGKSCRLRWANHL) and 118–141 (WAQMAEHLPGRTDNEIKNYWNTRI).

In terms of tissue distribution, mostly expressed in roots (e.g. root tips), stems, pollen, shoot apices, flowers and floral shoot tips, and, to a lower extent, in leaves and siliques.

It localises to the nucleus. Transcriptional activator of alpha-amylase expression that binds to 5'-CAACTGTC-3' motif in target gene promoter. In vegetative tissues, inhibits growth by reducing cell proliferation. Promotes the expression of aleurone-related genes (e.g. CP1, CP, GASA1, BXL1 and BXL2) in seeds. Together with MYB33 and MYB101, promotes the programmed cell death (PCD) the vacuolation of protein storage vacuoles (PSVs) in the aleurone layers during seed germination. Together with MYB33, facilitates anther and tapetum development. The chain is Transcription factor MYB65 from Arabidopsis thaliana (Mouse-ear cress).